The following is a 141-amino-acid chain: Guanyl-specific ribonuclease Sa3 (141 aa).

The or 43 signal peptide spans 1–36 (MRIPPRLVALAGAAAVAATLIAGPVAAAAPASHAVA). A disulfide bridge links Cys52 with Cys141. Glu99 acts as the Proton acceptor in catalysis. His130 functions as the Proton donor in the catalytic mechanism.

Belongs to the ribonuclease N1/T1 family.

The protein resides in the secreted. It catalyses the reaction [RNA] containing guanosine + H2O = an [RNA fragment]-3'-guanosine-3'-phosphate + a 5'-hydroxy-ribonucleotide-3'-[RNA fragment].. The polypeptide is Guanyl-specific ribonuclease Sa3 (rnaSA3) (Kitasatospora aureofaciens (Streptomyces aureofaciens)).